The chain runs to 132 residues: Small ribosomal subunit protein uS8 (132 aa).

The protein belongs to the universal ribosomal protein uS8 family. Part of the 30S ribosomal subunit. Contacts proteins S5 and S12.

One of the primary rRNA binding proteins, it binds directly to 16S rRNA central domain where it helps coordinate assembly of the platform of the 30S subunit. This chain is Small ribosomal subunit protein uS8, found in Nitrobacter hamburgensis (strain DSM 10229 / NCIMB 13809 / X14).